The following is a 151-amino-acid chain: MIELLKKIFLVDLFQGLFVTFRNQNPKYIYTEQYPAERPKVAERYRGAPRLNINPDNGETLCISCNLCALACPENLIVVTSERSEVTKRKELVTFTYDTSRCMFCGLCEDACPVDALELTQDFEMASYTREGQIWDRQALEEGPRPTQYKC.

4Fe-4S ferredoxin-type domains lie at 49–82 (PRLN…VTSE) and 93–122 (VTFT…LTQD). 8 residues coordinate [4Fe-4S] cluster: C62, C65, C68, C72, C102, C105, C108, and C112.

Belongs to the complex I 23 kDa subunit family. NDH-1 is composed of 14 different subunits. Subunits NuoA, H, J, K, L, M, N constitute the membrane sector of the complex. [4Fe-4S] cluster is required as a cofactor.

It localises to the cell inner membrane. It carries out the reaction a quinone + NADH + 5 H(+)(in) = a quinol + NAD(+) + 4 H(+)(out). NDH-1 shuttles electrons from NADH, via FMN and iron-sulfur (Fe-S) centers, to quinones in the respiratory chain. The immediate electron acceptor for the enzyme in this species is believed to be ubiquinone. Couples the redox reaction to proton translocation (for every two electrons transferred, four hydrogen ions are translocated across the cytoplasmic membrane), and thus conserves the redox energy in a proton gradient. The polypeptide is NADH-quinone oxidoreductase subunit I 2 (Solibacter usitatus (strain Ellin6076)).